Here is a 275-residue protein sequence, read N- to C-terminus: 2,3,4,5-tetrahydropyridine-2,6-dicarboxylate N-succinyltransferase (275 aa).

Residues arginine 104 and aspartate 141 each coordinate substrate.

It belongs to the transferase hexapeptide repeat family. Homotrimer.

Its subcellular location is the cytoplasm. It carries out the reaction (S)-2,3,4,5-tetrahydrodipicolinate + succinyl-CoA + H2O = (S)-2-succinylamino-6-oxoheptanedioate + CoA. It functions in the pathway amino-acid biosynthesis; L-lysine biosynthesis via DAP pathway; LL-2,6-diaminopimelate from (S)-tetrahydrodipicolinate (succinylase route): step 1/3. In Haemophilus influenzae (strain 86-028NP), this protein is 2,3,4,5-tetrahydropyridine-2,6-dicarboxylate N-succinyltransferase.